A 205-amino-acid chain; its full sequence is Ribosomal RNA small subunit methyltransferase G (205 aa).

Residues Gly-71, Phe-76, 120 to 121 (IE), and Arg-134 each bind S-adenosyl-L-methionine.

Belongs to the methyltransferase superfamily. RNA methyltransferase RsmG family.

The protein resides in the cytoplasm. It catalyses the reaction guanosine(527) in 16S rRNA + S-adenosyl-L-methionine = N(7)-methylguanosine(527) in 16S rRNA + S-adenosyl-L-homocysteine. Its function is as follows. Specifically methylates the N7 position of guanine in position 527 of 16S rRNA. The polypeptide is Ribosomal RNA small subunit methyltransferase G (Paramagnetospirillum magneticum (strain ATCC 700264 / AMB-1) (Magnetospirillum magneticum)).